The primary structure comprises 335 residues: Methionine import ATP-binding protein MetN 2 (335 aa).

One can recognise an ABC transporter domain in the interval Ile2–Val242. Gly38 to Ser45 lines the ATP pocket.

Belongs to the ABC transporter superfamily. Methionine importer (TC 3.A.1.24) family. In terms of assembly, the complex is composed of two ATP-binding proteins (MetN), two transmembrane proteins (MetI) and a solute-binding protein (MetQ).

It localises to the cell inner membrane. It catalyses the reaction L-methionine(out) + ATP + H2O = L-methionine(in) + ADP + phosphate + H(+). The catalysed reaction is D-methionine(out) + ATP + H2O = D-methionine(in) + ADP + phosphate + H(+). Part of the ABC transporter complex MetNIQ involved in methionine import. Responsible for energy coupling to the transport system. This is Methionine import ATP-binding protein MetN 2 from Pseudomonas entomophila (strain L48).